The primary structure comprises 243 residues: UPF0246 protein SAG2081 (243 aa).

It belongs to the UPF0246 family.

This is UPF0246 protein SAG2081 from Streptococcus agalactiae serotype V (strain ATCC BAA-611 / 2603 V/R).